The sequence spans 638 residues: 1-deoxy-D-xylulose-5-phosphate synthase (638 aa).

Residues His-75 and 116–118 (AHS) each bind thiamine diphosphate. Asp-147 provides a ligand contact to Mg(2+). Thiamine diphosphate contacts are provided by residues 148 to 149 (GA), Asn-177, Tyr-288, and Glu-370. Residue Asn-177 coordinates Mg(2+).

It belongs to the transketolase family. DXPS subfamily. In terms of assembly, homodimer. Mg(2+) serves as cofactor. Thiamine diphosphate is required as a cofactor.

It carries out the reaction D-glyceraldehyde 3-phosphate + pyruvate + H(+) = 1-deoxy-D-xylulose 5-phosphate + CO2. Its pathway is metabolic intermediate biosynthesis; 1-deoxy-D-xylulose 5-phosphate biosynthesis; 1-deoxy-D-xylulose 5-phosphate from D-glyceraldehyde 3-phosphate and pyruvate: step 1/1. Functionally, catalyzes the acyloin condensation reaction between C atoms 2 and 3 of pyruvate and glyceraldehyde 3-phosphate to yield 1-deoxy-D-xylulose-5-phosphate (DXP). In Cupriavidus pinatubonensis (strain JMP 134 / LMG 1197) (Cupriavidus necator (strain JMP 134)), this protein is 1-deoxy-D-xylulose-5-phosphate synthase.